The chain runs to 125 residues: uncharacterized protein (125 aa).

This is an uncharacterized protein from Escherichia coli (Bacteriophage T4).